An 843-amino-acid chain; its full sequence is Eisosome protein 1 (843 aa).

The segment at 1–54 (MSLISAVEDRDIHNIGKTSGGGSRTSSINSSKKSLKHGSKSLRKPKVYQTTGEP) is disordered. S2 carries the post-translational modification N-acetylserine. S2 is subject to Phosphoserine. Residues 33–46 (KSLKHGSKSLRKPK) are compositionally biased toward basic residues. 2 positions are modified to phosphoserine: S88 and S130. Positions 120–176 (KMGPKVVRNNSITSATSKTSKESQTKRKSKESPGAAASKAYSMTMETTSLSSQTNSR) are disordered. Polar residues-rich tracts occupy residues 127–137 (RNNSITSATSK) and 163–176 (TMET…TNSR). A phosphoserine mark is found at S182, S401, S584, and S710. The segment at 717–843 (DLPTQLEKIE…QDAISNQEKK (127 aa)) is disordered. Residue T720 is modified to Phosphothreonine. The span at 752-764 (STAAKEATETSSA) shows a compositional bias: low complexity. Phosphoserine is present on residues S763 and S775. Residues 781 to 797 (SGKEDANDCKSAEHSKE) show a composition bias toward basic and acidic residues. The span at 798-810 (ISVSQKAGNNKSL) shows a compositional bias: polar residues. Phosphoserine is present on residues S816, S828, S829, and S838.

The protein belongs to the EIS1 family.

Its subcellular location is the cytoplasmic granule. The protein resides in the cell membrane. Its function is as follows. Required for normal formation of eisosomes, large cytoplasmic protein assemblies that localize to specialized domains on plasma membrane and mark the site of endocytosis. This chain is Eisosome protein 1 (EIS1), found in Saccharomyces cerevisiae (strain JAY291) (Baker's yeast).